Here is a 281-residue protein sequence, read N- to C-terminus: Small ribosomal subunit protein uS2 (281 aa).

The disordered stretch occupies residues 233-281 (NKAEGEAAEQPMAAWEKELLTNEAPAEASAEAAAPAAAEGETAEAPKAE). The span at 255–275 (EAPAEASAEAAAPAAAEGETA) shows a compositional bias: low complexity.

The protein belongs to the universal ribosomal protein uS2 family.

In Bifidobacterium longum (strain DJO10A), this protein is Small ribosomal subunit protein uS2.